The following is a 444-amino-acid chain: tRNA-2-methylthio-N(6)-dimethylallyladenosine synthase (444 aa).

One can recognise an MTTase N-terminal domain in the interval 6-124 (KTFKIITYGC…LPQLIEEIKA (119 aa)). [4Fe-4S] cluster is bound by residues C15, C51, C85, C161, C165, and C168. The Radical SAM core domain occupies 147-377 (RARGAQAFVT…MELQNSISLA (231 aa)). Positions 380–443 (EALVGQEVEV…TWLLKGEMVD (64 aa)) constitute a TRAM domain.

The protein belongs to the methylthiotransferase family. MiaB subfamily. Monomer. [4Fe-4S] cluster is required as a cofactor.

The protein localises to the cytoplasm. The enzyme catalyses N(6)-dimethylallyladenosine(37) in tRNA + (sulfur carrier)-SH + AH2 + 2 S-adenosyl-L-methionine = 2-methylsulfanyl-N(6)-dimethylallyladenosine(37) in tRNA + (sulfur carrier)-H + 5'-deoxyadenosine + L-methionine + A + S-adenosyl-L-homocysteine + 2 H(+). In terms of biological role, catalyzes the methylthiolation of N6-(dimethylallyl)adenosine (i(6)A), leading to the formation of 2-methylthio-N6-(dimethylallyl)adenosine (ms(2)i(6)A) at position 37 in tRNAs that read codons beginning with uridine. The polypeptide is tRNA-2-methylthio-N(6)-dimethylallyladenosine synthase (Moorella thermoacetica (strain ATCC 39073 / JCM 9320)).